A 230-amino-acid chain; its full sequence is Demethylmenaquinone methyltransferase (230 aa).

S-adenosyl-L-methionine contacts are provided by residues Thr-62, Asp-80, 100–101, and Ser-117; that span reads DA.

Belongs to the class I-like SAM-binding methyltransferase superfamily. MenG/UbiE family.

The enzyme catalyses a 2-demethylmenaquinol + S-adenosyl-L-methionine = a menaquinol + S-adenosyl-L-homocysteine + H(+). It functions in the pathway quinol/quinone metabolism; menaquinone biosynthesis; menaquinol from 1,4-dihydroxy-2-naphthoate: step 2/2. Its function is as follows. Methyltransferase required for the conversion of demethylmenaquinol (DMKH2) to menaquinol (MKH2). The chain is Demethylmenaquinone methyltransferase from Mycolicibacterium paratuberculosis (strain ATCC BAA-968 / K-10) (Mycobacterium paratuberculosis).